Consider the following 21-residue polypeptide: Hemolymph 65 kDa lectin BG04 (21 aa).

In terms of tissue distribution, hemolymph.

The protein resides in the secreted. Functionally, binds and precipitates antigens of the parasite Echinostoma paraensei. This Biomphalaria glabrata (Bloodfluke planorb) protein is Hemolymph 65 kDa lectin BG04 (BG04).